The primary structure comprises 541 residues: Chaperonin GroEL 2 (541 aa).

Residues 30-33 (TLGP), Lys-51, 87-91 (DGTTT), Gly-414, and Asp-495 each bind ATP.

Belongs to the chaperonin (HSP60) family. Forms a cylinder of 14 subunits composed of two heptameric rings stacked back-to-back. Interacts with the co-chaperonin GroES.

The protein localises to the cytoplasm. It carries out the reaction ATP + H2O + a folded polypeptide = ADP + phosphate + an unfolded polypeptide.. Together with its co-chaperonin GroES, plays an essential role in assisting protein folding. The GroEL-GroES system forms a nano-cage that allows encapsulation of the non-native substrate proteins and provides a physical environment optimized to promote and accelerate protein folding. The chain is Chaperonin GroEL 2 from Cereibacter sphaeroides (Rhodobacter sphaeroides).